A 1033-amino-acid polypeptide reads, in one-letter code: TBC domain-containing protein kinase-like protein (1033 aa).

Disordered stretches follow at residues 1–21, 35–55, and 81–101; these read MMKS…YKFK, YDNN…NTVT, and GSIG…TPKP. Composition is skewed to low complexity over residues 36–52 and 81–97; these read DNNN…DDNN and GSIG…NSVS. In terms of domain architecture, Protein kinase spans 72 to 425; sequence NKLTINQNNG…SETLLDHPYF (354 aa). Residues 78–86 and K113 contribute to the ATP site; that span reads QNNGSIGGS. Residues 535–546 are compositionally biased toward polar residues; the sequence is STNSGLNSPQPY. The tract at residues 535-560 is disordered; sequence STNSGLNSPQPYQHQHHQHQHQHQHP. A compositionally biased stretch (basic residues) spans 548 to 558; that stretch reads HQHHQHQHQHQ. The Rab-GAP TBC domain occupies 657–844; it reads FVPPILRGDI…ILWDSILLCP (188 aa).

It belongs to the protein kinase superfamily. Ser/Thr protein kinase family.

This chain is TBC domain-containing protein kinase-like protein (tbck), found in Dictyostelium discoideum (Social amoeba).